The primary structure comprises 228 residues: 2,3-bisphosphoglycerate-dependent phosphoglycerate mutase (228 aa).

Substrate contacts are provided by residues 8 to 15 (RHGQSQWN), 21 to 22 (TG), R60, 87 to 90 (ERHY), K98, 114 to 115 (RR), and 180 to 181 (GN). H9 (tele-phosphohistidine intermediate) is an active-site residue. The Proton donor/acceptor role is filled by E87.

This sequence belongs to the phosphoglycerate mutase family. BPG-dependent PGAM subfamily. In terms of assembly, homodimer.

The enzyme catalyses (2R)-2-phosphoglycerate = (2R)-3-phosphoglycerate. Its pathway is carbohydrate degradation; glycolysis; pyruvate from D-glyceraldehyde 3-phosphate: step 3/5. In terms of biological role, catalyzes the interconversion of 2-phosphoglycerate and 3-phosphoglycerate. In Novosphingobium aromaticivorans (strain ATCC 700278 / DSM 12444 / CCUG 56034 / CIP 105152 / NBRC 16084 / F199), this protein is 2,3-bisphosphoglycerate-dependent phosphoglycerate mutase.